We begin with the raw amino-acid sequence, 84 residues long: Exendin-2-long (84 aa).

The signal sequence occupies residues 1 to 23 (MKSILWLCVFGLLIATLFPVSWQ). Residues 24 to 44 (MAIKSRLSSEDSETDQRLFES) constitute a propeptide that is removed on maturation.

The protein belongs to the glucagon family. Post-translationally, an amidated Pro-81 is described. Such an amidation is however not compatible with the sequence displayed. Indeed cDNAs do not encode a Gly that could serve as substrate for peptide alpha-amidation. Expressed by the venom gland. Not expressed in the pancreas, liver, stomach, small intestine, lung, heart, kidney, spleen, ovary, and brain.

The protein localises to the secreted. Functionally, has vasoactive intestinal peptide(VIP)/secretin-like biological activity. Interacts with rat and human VIP receptors 1 (VIPR1) and 2 (VIPR2), with the highest affinity for the human VIPR2. Induces hypotension that is mediated by relaxation of cardiac smooth muscle. This vasodilation may not be transduced by VIP or PACAP receptors. The sequence is that of Exendin-2-long from Heloderma suspectum (Gila monster).